We begin with the raw amino-acid sequence, 37 residues long: Dolichyl-diphosphooligosaccharide--protein glycosyltransferase subunit 4 (37 aa).

Topologically, residues 1–4 (MITD) are lumenal. Residues 5–25 (VQLAIFANMLGVSLFLLVVLY) form a helical membrane-spanning segment. Over 26-37 (HYVAVNNPKKQE) the chain is Cytoplasmic.

This sequence belongs to the OST4 family. In terms of assembly, component of the oligosaccharyltransferase (OST) complex. OST exists in two different complex forms which contain common core subunits RPN1, RPN2, OST48, OST4, DAD1 and TMEM258, either STT3A or STT3B as catalytic subunits, and form-specific accessory subunits. STT3A complex assembly occurs through the formation of 3 subcomplexes. Subcomplex 1 contains RPN1 and TMEM258, subcomplex 2 contains the STT3A-specific subunits STT3A, DC2/OSTC, and KCP2 as well as the core subunit OST4, and subcomplex 3 contains RPN2, DAD1, and OST48. The STT3A complex can form stable complexes with the Sec61 complex or with both the Sec61 and TRAP complexes.

The protein resides in the endoplasmic reticulum. It is found in the endoplasmic reticulum membrane. Its pathway is protein modification; protein glycosylation. In terms of biological role, subunit of the oligosaccharyl transferase (OST) complex that catalyzes the initial transfer of a defined glycan (Glc(3)Man(9)GlcNAc(2) in eukaryotes) from the lipid carrier dolichol-pyrophosphate to an asparagine residue within an Asn-X-Ser/Thr consensus motif in nascent polypeptide chains, the first step in protein N-glycosylation. N-glycosylation occurs cotranslationally and the complex associates with the Sec61 complex at the channel-forming translocon complex that mediates protein translocation across the endoplasmic reticulum (ER). All subunits are required for a maximal enzyme activity. Specifically involved in maintaining stability of STT3A-containing OST complexes. In Homo sapiens (Human), this protein is Dolichyl-diphosphooligosaccharide--protein glycosyltransferase subunit 4.